Reading from the N-terminus, the 403-residue chain is Ribosomal RNA large subunit methyltransferase I (403 aa).

Residues Tyr9–Arg88 enclose the PUA domain.

This sequence belongs to the methyltransferase superfamily. RlmI family.

Its subcellular location is the cytoplasm. It carries out the reaction cytidine(1962) in 23S rRNA + S-adenosyl-L-methionine = 5-methylcytidine(1962) in 23S rRNA + S-adenosyl-L-homocysteine + H(+). In terms of biological role, specifically methylates the cytosine at position 1962 (m5C1962) of 23S rRNA. The polypeptide is Ribosomal RNA large subunit methyltransferase I (Salmonella paratyphi C (strain RKS4594)).